A 549-amino-acid polypeptide reads, in one-letter code: Polynucleotide 5'-hydroxyl-kinase nol-9 (549 aa).

An ATP-binding site is contributed by 190–197 (GHKGAGKS).

Belongs to the Clp1 family. NOL9/GRC3 subfamily.

Its subcellular location is the nucleus. It is found in the nucleolus. In terms of biological role, polynucleotide 5'-kinase involved in rRNA processing. In Caenorhabditis elegans, this protein is Polynucleotide 5'-hydroxyl-kinase nol-9 (nol-9).